We begin with the raw amino-acid sequence, 642 residues long: Transmembrane 9 superfamily member 4 (642 aa).

The first 23 residues, Met1–Ala23, serve as a signal peptide directing secretion. The Extracellular portion of the chain corresponds to Phe24–Phe281. Residues Ser282–Ile302 traverse the membrane as a helical segment. Residues Arg303–Ser346 are Cytoplasmic-facing. Phosphotyrosine is present on Tyr312. Residues Leu347 to Leu367 form a helical membrane-spanning segment. The Extracellular segment spans residues Gly368 to Gly376. A helical membrane pass occupies residues Ala377–Ala397. At Gly398–Thr416 the chain is on the cytoplasmic side. Residues Ala417–Gly437 traverse the membrane as a helical segment. Topologically, residues Lys438–Met449 are extracellular. Residues Val450–Phe470 form a helical membrane-spanning segment. The Cytoplasmic portion of the chain corresponds to Gly471 to Val501. The helical transmembrane segment at Gly502–Phe522 threads the bilayer. Over Ser523 to Gly535 the chain is Extracellular. A helical transmembrane segment spans residues Phe536–Val556. The Cytoplasmic segment spans residues Tyr557 to Arg570. Residues Asn571–Val591 form a helical membrane-spanning segment. Residues Asn592–Glu598 are Extracellular-facing. Residues Phe599–Leu619 form a helical membrane-spanning segment. Over Thr620–Asp642 the chain is Cytoplasmic.

It belongs to the nonaspanin (TM9SF) (TC 9.A.2) family. Interacts with ATP6V1H in colon cancer cells. In terms of tissue distribution, highly expressed in metastatic melanoma cells whereas it is undetectable in primary melanoma cells, healthy skin tissues and peripheral blood lymphocytes. Expressed in CD34(+) hematopoietic progenitor cells and during monocyte and granulocyte differentiation. Overexpressed in acute myeloid leukemia, in particular in those displaying granulocytic differentiation (at protein level).

The protein localises to the membrane. It is found in the golgi apparatus. It localises to the early endosome. Associates with proteins harboring glycine-rich transmembrane domains and ensures their efficient localization to the cell surface. Regulates the assembly and activity of V-ATPase in colon cancer cells via its interaction with V-type proton ATPase subunit H (ATP6V1H) and contributes to V-ATPase-mediated pH alterations in cancer cells which play an important role in drug resistance and invasiveness of colon cancer cells. Plays an important role in an atypical phagocytic activity of metastatic melanoma cells called cannibalism and is involved in the pH regulation of the intracellular vesicles in tumor cells. This Homo sapiens (Human) protein is Transmembrane 9 superfamily member 4 (TM9SF4).